A 246-amino-acid chain; its full sequence is Osmotin-like protein TPM-1 (246 aa).

The first 21 residues, 1-21 (MAYLRSSFVFFLLAFVTYTYA), serve as a signal peptide directing secretion. Cystine bridges form between Cys30/Cys225, Cys72/Cys82, Cys87/Cys93, Cys141/Cys213, Cys146/Cys196, Cys154/Cys164, Cys168/Cys177, and Cys178/Cys183.

Belongs to the thaumatin family.

It localises to the vacuole. It carries out the reaction Endohydrolysis of (1-&gt;3)- or (1-&gt;4)-linkages in beta-D-glucans when the glucose residue whose reducing group is involved in the linkage to be hydrolyzed is itself substituted at C-3.. Functionally, antifungal protein that inhibits the growth of several phytopathogenic fungi (e.g. Trichothecium roseum, Fusarium oxysporum, Phytophthora citrophthora and Colletotrichum coccodes). May bind to beta-glucans and have beta-1,3-D-glucanase activity. This is Osmotin-like protein TPM-1 from Solanum lycopersicum (Tomato).